The primary structure comprises 159 residues: Ribosomal RNA large subunit methyltransferase H (159 aa).

Residues Leu76, Gly108, and 127–132 (LSRLTF) contribute to the S-adenosyl-L-methionine site.

The protein belongs to the RNA methyltransferase RlmH family. As to quaternary structure, homodimer.

It is found in the cytoplasm. It carries out the reaction pseudouridine(1915) in 23S rRNA + S-adenosyl-L-methionine = N(3)-methylpseudouridine(1915) in 23S rRNA + S-adenosyl-L-homocysteine + H(+). In terms of biological role, specifically methylates the pseudouridine at position 1915 (m3Psi1915) in 23S rRNA. This chain is Ribosomal RNA large subunit methyltransferase H, found in Syntrophomonas wolfei subsp. wolfei (strain DSM 2245B / Goettingen).